We begin with the raw amino-acid sequence, 1499 residues long: Autophagy-related protein 2 (1499 aa).

A compositionally biased stretch (polar residues) spans Glu211–Ser221. The tract at residues Glu211–Ser237 is disordered. Residues Lys224 to Asp234 are compositionally biased toward acidic residues.

It belongs to the ATG2 family.

Its subcellular location is the preautophagosomal structure membrane. It localises to the endoplasmic reticulum membrane. It catalyses the reaction a 1,2-diacyl-sn-glycero-3-phosphocholine(in) = a 1,2-diacyl-sn-glycero-3-phosphocholine(out). The enzyme catalyses a 1,2-diacyl-sn-glycero-3-phospho-L-serine(in) = a 1,2-diacyl-sn-glycero-3-phospho-L-serine(out). The catalysed reaction is a 1,2-diacyl-sn-glycero-3-phosphoethanolamine(in) = a 1,2-diacyl-sn-glycero-3-phosphoethanolamine(out). Lipid transfer protein required for autophagosome completion and peroxisome degradation. Tethers the edge of the isolation membrane (IM) to the endoplasmic reticulum (ER) and mediates direct lipid transfer from ER to IM for IM expansion. ATG2 binds to the ER exit site (ERES), which is the membrane source for autophagosome formation, using basic residues in its N-terminal region (NR) and to the expanding edge of the IM through its C-terminal region. The latter binding is assisted by an ATG18-PtdIns3P interaction. ATG2 then extracts phospholipids from the membrane source using its NR and transfers them to ATG9 to the IM through its predicted beta-sheet-rich structure for membrane expansion. The protein is Autophagy-related protein 2 of Kluyveromyces marxianus (strain DMKU3-1042 / BCC 29191 / NBRC 104275) (Yeast).